Reading from the N-terminus, the 177-residue chain is 3-hydroxydecanoyl-[acyl-carrier-protein] dehydratase (177 aa).

The active site involves histidine 71.

Belongs to the thioester dehydratase family. FabA subfamily. Homodimer.

Its subcellular location is the cytoplasm. The enzyme catalyses a (3R)-hydroxyacyl-[ACP] = a (2E)-enoyl-[ACP] + H2O. It catalyses the reaction (3R)-hydroxydecanoyl-[ACP] = (2E)-decenoyl-[ACP] + H2O. The catalysed reaction is (2E)-decenoyl-[ACP] = (3Z)-decenoyl-[ACP]. Its pathway is lipid metabolism; fatty acid biosynthesis. In terms of biological role, necessary for the introduction of cis unsaturation into fatty acids. Catalyzes the dehydration of (3R)-3-hydroxydecanoyl-ACP to E-(2)-decenoyl-ACP and then its isomerization to Z-(3)-decenoyl-ACP. Can catalyze the dehydratase reaction for beta-hydroxyacyl-ACPs with saturated chain lengths up to 16:0, being most active on intermediate chain length. The polypeptide is 3-hydroxydecanoyl-[acyl-carrier-protein] dehydratase (Wigglesworthia glossinidia brevipalpis).